Consider the following 252-residue polypeptide: tRNA (guanine-N(7)-)-methyltransferase (252 aa).

S-adenosyl-L-methionine is bound by residues E51, D76, N103, and D125. Residue D125 is part of the active site. Substrate contacts are provided by residues K129, D159, and 199–202; that span reads TYYE.

The protein belongs to the class I-like SAM-binding methyltransferase superfamily. TrmB family.

The enzyme catalyses guanosine(46) in tRNA + S-adenosyl-L-methionine = N(7)-methylguanosine(46) in tRNA + S-adenosyl-L-homocysteine. It functions in the pathway tRNA modification; N(7)-methylguanine-tRNA biosynthesis. Functionally, catalyzes the formation of N(7)-methylguanine at position 46 (m7G46) in tRNA. The polypeptide is tRNA (guanine-N(7)-)-methyltransferase (Bacteroides fragilis (strain YCH46)).